The following is a 335-amino-acid chain: Cathepsin B-like cysteine proteinase 4 (335 aa).

Residues 1 to 15 form the signal peptide; sequence MKYLILAALVAVTAG. The propeptide occupies 16–80; that stretch reads LVIPLVPKTQ…VVKHDINEDT (65 aa). 6 disulfide bridges follow: Cys94–Cys123, Cys106–Cys150, Cys142–Cys209, Cys143–Cys146, Cys179–Cys213, and Cys187–Cys199. Cys109 is an active-site residue. Asn193 carries N-linked (GlcNAc...) asparagine glycosylation. Catalysis depends on residues His281 and Asn301.

This sequence belongs to the peptidase C1 family.

Its subcellular location is the secreted. In terms of biological role, thiol protease which shows activity against the fluorogenic substrate z-Arg-Arg-AMC. This is Cathepsin B-like cysteine proteinase 4 (cpr-4) from Caenorhabditis elegans.